The primary structure comprises 618 residues: MRSRILAIVFAARHVAALPLAAEDAAATLSLTSSASSTTVLPSPTQYTLPNNDPNQGARNASIARKRELFLYGPSTLGQTTFYPTGELGNNISARDVLLWRQDAANQTATAYREANETFADITSRGGFKTLDDFALLYNGHWKESVPEGISKGMLSNYTSDLLFSMERLSSNPYVLKRLHPTKDKLPFSVESKVVKKLTATTLEALHKGGRLFLVDHSYQKKYTPQPGRYAAACQGLFYLDARSNQFLPLAIKTNVGADLTYTPLDDKNDWLLAKIMFNNNDLFYSQMYHVLFHTIPEIVHEAAFRTLSDRHPVMGVLNRLMYQAYAIRPVGGAVLFNPGGFWDQNFGLPASAAIDFPGSVYAQGGGGFQAGYLEKDLRSRGLVGEDSGPRLPHFPFYEDAHRLIGAIRRFMQAFVDSTYGADDGDDGALLRDYELQNWIAEANGPAQVRDFPAAPLRRRAQLVDVLTHVAWVTGGAHHVMNQGSPVKFSGVVPLHPAALYAPIPTTKGATGNGTRAGLLAWLPNERQAVEQVSLLARFNRAQVGDRKQTVRDAFAAPDLLAGNGPGYAAANARFVEDTGRISREMAGRGFDGKGLSQGMPFVWTALNPAVNPFFLSV.

Positions 1–16 (MRSRILAIVFAARHVA) are cleaved as a signal peptide. Over residues 36-45 (SSTTVLPSPT) the composition is skewed to low complexity. The segment at 36-58 (SSTTVLPSPTQYTLPNNDPNQGA) is disordered. The span at 46–58 (QYTLPNNDPNQGA) shows a compositional bias: polar residues. One can recognise a Lipoxygenase domain in the interval 47 to 617 (YTLPNNDPNQ…NPAVNPFFLS (571 aa)). N-linked (GlcNAc...) asparagine glycosylation is found at Asn60, Asn91, Asn106, Asn116, and Asn157. The Mn(2+) site is built by His290, His294, His478, and Asn482. Asn513 carries an N-linked (GlcNAc...) asparagine glycan. Val618 contacts Mn(2+).

The protein belongs to the lipoxygenase family. Mn(2+) is required as a cofactor. In terms of processing, N- and O-glycosylated.

Its subcellular location is the secreted. It catalyses the reaction (9Z,12Z)-octadecadienoate + O2 = (11S)-hydroperoxy-(9Z,12Z)-octadecadienoate. The enzyme catalyses (9Z,12Z)-octadecadienoate + O2 = (13R)-hydroperoxy-(9Z,11E)-octadecadienoate. The catalysed reaction is (9Z,12Z,15Z)-octadecatrienoate + O2 = (11S)-hydroperoxy-(9Z,12Z,15Z)-octadecatrienoate. It carries out the reaction (9Z,12Z,15Z)-octadecatrienoate + O2 = (13R)-hydroperoxy-(9Z,11E,15Z)-octadecatrienoate. Lipoxygenase that metabolizes linoleic and alpha-linolenic acids to 11S- and 13R-hydroperoxy fatty acids. At the end of lipoxygenation, the intermediate product 11S-HPODE from linoleic acid is then transformed into 13R-HPODE as the final product. It also acts on alpha-linolenic acid producing 11S-HPOTrE and 13R-HPOTrE with subsequent transformation of 11S-HPOTrE to 13R-HPOTrE as the final product. Gamma-linolenic acid is a poor substrate. Oleate and arachidonate are not substrates. The chain is Manganese lipoxygenase from Gaeumannomyces tritici (Wheat and barley take-all root rot fungus).